The sequence spans 732 residues: Catalase-peroxidase (732 aa).

Residues 1–23 (MSEQSKCPVTGRTAGHPVAGGGM) are disordered. The segment at residues 97–220 (WHSAGTYRTS…LAAVQMGLIY (124 aa)) is a cross-link (tryptophyl-tyrosyl-methioninium (Trp-Tyr) (with M-246)). Catalysis depends on histidine 98, which acts as the Proton acceptor. A cross-link (tryptophyl-tyrosyl-methioninium (Tyr-Met) (with W-97)) is located at residues 220 to 246 (YVNPEGPDGNPDPVAAGRDIRETFARM). Position 261 (histidine 261) interacts with heme b.

It belongs to the peroxidase family. Peroxidase/catalase subfamily. As to quaternary structure, homodimer or homotetramer. Requires heme b as cofactor. Post-translationally, formation of the three residue Trp-Tyr-Met cross-link is important for the catalase, but not the peroxidase activity of the enzyme.

The enzyme catalyses H2O2 + AH2 = A + 2 H2O. The catalysed reaction is 2 H2O2 = O2 + 2 H2O. Its function is as follows. Bifunctional enzyme with both catalase and broad-spectrum peroxidase activity. In Chlorobium limicola (strain DSM 245 / NBRC 103803 / 6330), this protein is Catalase-peroxidase.